The primary structure comprises 357 residues: Glycerol-3-phosphate dehydrogenase [NAD(P)+] (357 aa).

4 residues coordinate NADPH: S30, F31, R51, and K124. Sn-glycerol 3-phosphate contacts are provided by K124 and G152. Position 156 (A156) interacts with NADPH. Positions 207, 260, 270, 271, and 272 each coordinate sn-glycerol 3-phosphate. The active-site Proton acceptor is K207. R271 serves as a coordination point for NADPH. E297 serves as a coordination point for NADPH.

It belongs to the NAD-dependent glycerol-3-phosphate dehydrogenase family.

It is found in the cytoplasm. It catalyses the reaction sn-glycerol 3-phosphate + NAD(+) = dihydroxyacetone phosphate + NADH + H(+). The enzyme catalyses sn-glycerol 3-phosphate + NADP(+) = dihydroxyacetone phosphate + NADPH + H(+). It participates in membrane lipid metabolism; glycerophospholipid metabolism. In terms of biological role, catalyzes the reduction of the glycolytic intermediate dihydroxyacetone phosphate (DHAP) to sn-glycerol 3-phosphate (G3P), the key precursor for phospholipid synthesis. In Acinetobacter baumannii (strain AB307-0294), this protein is Glycerol-3-phosphate dehydrogenase [NAD(P)+].